The chain runs to 67 residues: UPF0253 protein VV2574 (67 aa).

Belongs to the UPF0253 family.

The protein is UPF0253 protein VV2574 of Vibrio vulnificus (strain YJ016).